Here is a 128-residue protein sequence, read N- to C-terminus: Iron-sulfur cluster insertion protein ErpA (128 aa).

Iron-sulfur cluster-binding residues include Cys-56, Cys-120, and Cys-122.

Belongs to the HesB/IscA family. Homodimer. Iron-sulfur cluster serves as cofactor.

Required for insertion of 4Fe-4S clusters for at least IspG. This Xanthomonas oryzae pv. oryzae (strain MAFF 311018) protein is Iron-sulfur cluster insertion protein ErpA.